Here is a 135-residue protein sequence, read N- to C-terminus: Ribosome-binding factor A (135 aa).

Belongs to the RbfA family. Monomer. Binds 30S ribosomal subunits, but not 50S ribosomal subunits or 70S ribosomes.

Its subcellular location is the cytoplasm. One of several proteins that assist in the late maturation steps of the functional core of the 30S ribosomal subunit. Associates with free 30S ribosomal subunits (but not with 30S subunits that are part of 70S ribosomes or polysomes). Required for efficient processing of 16S rRNA. May interact with the 5'-terminal helix region of 16S rRNA. This Hyphomonas neptunium (strain ATCC 15444) protein is Ribosome-binding factor A.